Consider the following 495-residue polypeptide: Trimethylamine methyltransferase MttB1 (495 aa).

A non-standard amino acid (pyrrolysine) is located at residue Pyl-334.

This sequence belongs to the trimethylamine methyltransferase family. Can form a complex with MttC.

The catalysed reaction is Co(I)-[trimethylamine-specific corrinoid protein] + trimethylamine + H(+) = methyl-Co(III)-[trimethylamine-specific corrinoid protein] + dimethylamine. It participates in one-carbon metabolism; methanogenesis from trimethylamine. Functionally, catalyzes the transfer of a methyl group from trimethylamine to the corrinoid cofactor of MttC. The chain is Trimethylamine methyltransferase MttB1 (mttB1) from Methanosarcina acetivorans (strain ATCC 35395 / DSM 2834 / JCM 12185 / C2A).